Here is a 218-residue protein sequence, read N- to C-terminus: uncharacterized protein (218 aa).

Residues 11–31 (AAGLFPLALMLSGCISYALVS) traverse the membrane as a helical segment.

Its subcellular location is the membrane. This is an uncharacterized protein from Escherichia coli (strain K12).